A 367-amino-acid chain; its full sequence is 3-dehydroquinate synthase (367 aa).

Residues 111 to 115 (GVVGD), 135 to 136 (TS), Lys-148, Lys-157, and 175 to 178 (TLDT) each bind NAD(+). Zn(2+) is bound by residues Glu-190, His-254, and His-271.

The protein belongs to the sugar phosphate cyclases superfamily. Dehydroquinate synthase family. It depends on Co(2+) as a cofactor. Zn(2+) is required as a cofactor. NAD(+) serves as cofactor.

The protein resides in the cytoplasm. The enzyme catalyses 7-phospho-2-dehydro-3-deoxy-D-arabino-heptonate = 3-dehydroquinate + phosphate. Its pathway is metabolic intermediate biosynthesis; chorismate biosynthesis; chorismate from D-erythrose 4-phosphate and phosphoenolpyruvate: step 2/7. Its function is as follows. Catalyzes the conversion of 3-deoxy-D-arabino-heptulosonate 7-phosphate (DAHP) to dehydroquinate (DHQ). The sequence is that of 3-dehydroquinate synthase from Salinibacter ruber (strain DSM 13855 / M31).